A 594-amino-acid chain; its full sequence is Protein CBFA2T2 (594 aa).

The residue at position 24 (Ser-24) is a Phosphoserine. A Glycyl lysine isopeptide (Lys-Gly) (interchain with G-Cter in SUMO2) cross-link involves residue Lys-29. Residues 48-96 (GGPRPVSFTPTALSNGINHSPPTLNGAPSPPQRFSNGPASSTSSALTNQ) are disordered. Composition is skewed to polar residues over residues 55-70 (FTPT…SPPT) and 79-96 (QRFS…LTNQ). Residues 98-206 (LPATCGARQL…QHEHLLLNTS (109 aa)) are interaction with PRDM14. The region spanning 104–199 (ARQLSKLKRF…TPSQYLAQHE (96 aa)) is the TAFH domain. The tract at residues 220-257 (VHGNGKRPSPERRDENNFERDTVPPEPPAKRVCTISPA) is disordered. The span at 227–242 (PSPERRDENNFERDTV) shows a compositional bias: basic and acidic residues. Ser-255 is subject to Phosphoserine. Residues 322-368 (QDELVDHRLTEREWADEWKHLDHALNCIMEMVEKTRRSMAVLRRCQE) are nervy homology region 2 (NHR2). The tract at residues 388-416 (RKTGTELVSRQHSPGSTDSLSNDSQREFT) is disordered. The segment covering 393-410 (ELVSRQHSPGSTDSLSND) has biased composition (polar residues). Ser-400 carries the post-translational modification Phosphoserine. The segment at 426-475 (VEFWKKTEEAVNKVKIQAMSEVQKAVAEAEQKAFEVIATERARMEQTIAD) is nervy homology region 3 (NHR3). A Glycyl lysine isopeptide (Lys-Gly) (interchain with G-Cter in SUMO2) cross-link involves residue Lys-440. Residues 442 to 482 (QAMSEVQKAVAEAEQKAFEVIATERARMEQTIADVKRQAAE) adopt a coiled-coil conformation. Zn(2+)-binding residues include Cys-498, Cys-501, Cys-509, Cys-512, Cys-518, Cys-522, His-530, and Cys-534. The segment at 498–534 (CWNCGRKASETCSGCNIARYCGSFCQHKDWERHHRLC) adopts an MYND-type zinc-finger fold. The segment at 538-594 (LHGHSPHSQSRPLLPGGRGSARSADCSVPSPALDKTSATTSRSSTPASVTAIDANGL) is disordered. Ser-567 carries the phosphoserine modification. The segment covering 573–588 (TSATTSRSSTPASVTA) has biased composition (low complexity).

This sequence belongs to the CBFA2T family. As to quaternary structure, homooligomer. Homotetramerization is mediated by the NHR2 domain. Interacts with CBFA2T3/MTG16. Can interact with RUNX1T1/CBFA2T1. Heterotetramerization between members of the CBFA2T family is proposed. Interacts with RBP, GFI1, TCF4, PRDM14. Interacts with TAL1 and CBFA2T3/MTG16; the heteromer with CBFA2T3/MTG16 may function in repression of TAL1. In terms of tissue distribution, expressed in embryonic stem cells.

It is found in the nucleus. In terms of biological role, transcriptional corepressor which facilitates transcriptional repression via its association with DNA-binding transcription factors and recruitment of other corepressors and histone-modifying enzymes. Via association with PRDM14 is involved in regulation of embryonic stem cell (ESC) pluripotency. Involved in primordial germ cell (PCG) formation. Stabilizes PRDM14 and OCT4 on chromatin in a homooligomerization-dependent mannerCan repress the expression of MMP7 in a ZBTB33-dependent manner. Through heteromerization with CBFA2T3/MTG16 may be involved in regulation of the proliferation and the differentiation of erythroid progenitors by repressing the expression of TAL1 target genes. Required for the maintenance of the secretory cell lineage in the small intestine. Can inhibit Notch signaling probably by association with RBPJ and may be involved in GFI1-mediated Paneth cell differentiation. This chain is Protein CBFA2T2 (Cbfa2t2), found in Mus musculus (Mouse).